The following is a 700-amino-acid chain: Acyl-coenzyme A oxidase 3 (700 aa).

This sequence belongs to the acyl-CoA oxidase family. As to quaternary structure, heteropentamer composed of five different subunits. It depends on FAD as a cofactor.

It localises to the peroxisome. The enzyme catalyses a 2,3-saturated acyl-CoA + O2 = a (2E)-enoyl-CoA + H2O2. Its pathway is lipid metabolism; peroxisomal fatty acid beta-oxidation. Functionally, oxidizes aliphatic acyl-CoA substrates of different chain lengths such as hexanoyl-CoA, decanoyl-CoA and myristoyl-CoA as well as aromatic/heterocyclic ring-substituted chromogenic substrates, such as furylpropionyl-CoA. Of the above substrates, the efficiency of the enzyme, exhibits the following order: decanoyl-CoA &gt; myristoyl-CoA &gt; hexanoyl-CoA &gt; furyl-propionyl-CoA. The protein is Acyl-coenzyme A oxidase 3 (POX3) of Yarrowia lipolytica (strain CLIB 122 / E 150) (Yeast).